The primary structure comprises 156 residues: EPIDERMAL PATTERNING FACTOR-like protein 6 (156 aa).

A signal peptide spans 1 to 47; that stretch reads MGFERTSSSLSLLSSSLPSSLQPSENTRAKFSLFYLLLLFFVLCVIA. 3 disulfide bridges follow: cysteine 113–cysteine 147, cysteine 117–cysteine 123, and cysteine 120–cysteine 149.

This sequence belongs to the plant cysteine rich small secretory peptide family. Epidermal patterning factor subfamily. As to quaternary structure, interacts with ERECTA. As to expression, expressed in the internal layers of the root, hypocotyl and stems, and in the midrib of developing rosette leaves. Detected in a ring of cells surrounding the vascular elements. Expressed in developing stems soon after bolting, in inflorescence stems, near the root apex and in the chalazal region of ovules. Not found in cotyledons or in stomatal precursors or stomata.

It localises to the secreted. In terms of biological role, acts primarily as positive regulator of inflorescence growth. Endodermal expression is sufficient for proper inflorescence architecture. Redundantly involved with EPFL4 in procambial development regulation. Also acts as tissue-specific regulator of epidermal pattern. Controls stomatal patterning by repressing stomatal production. TMM (AC Q9SSD1) functions to dampen or block CHAL signaling. Not processed by SDD1 (AC O64495). Acts as growth-regulatory ligand for ERECTA family receptors. The protein is EPIDERMAL PATTERNING FACTOR-like protein 6 of Arabidopsis thaliana (Mouse-ear cress).